We begin with the raw amino-acid sequence, 597 residues long: Alpha-1,2-mannosyltransferase MNN2 (597 aa).

The Cytoplasmic portion of the chain corresponds to 1-12; sequence MLLTKRFSKLFK. A helical; Signal-anchor for type II membrane protein membrane pass occupies residues 13 to 28; sequence LTFIVLILCGLFVITN. Residues 29-597 lie on the Extracellular side of the membrane; sequence KYMDENTSVK…STHDKAIAGK (569 aa). N-linked (GlcNAc...) asparagine glycans are attached at residues N34, N363, and N473.

It belongs to the MNN1/MNT family. In terms of assembly, interacts with SVP26.

It localises to the golgi apparatus membrane. It functions in the pathway protein modification; protein glycosylation. Its function is as follows. Alpha-1,2-mannosyltransferase, responsible for addition of the first alpha-1,2-linked mannose to form the branches on the mannan backbone of oligosaccharides. The sequence is that of Alpha-1,2-mannosyltransferase MNN2 (MNN2) from Saccharomyces cerevisiae (strain ATCC 204508 / S288c) (Baker's yeast).